The sequence spans 230 residues: Large ribosomal subunit protein uL1 (230 aa).

It belongs to the universal ribosomal protein uL1 family. Part of the 50S ribosomal subunit.

Functionally, binds directly to 23S rRNA. The L1 stalk is quite mobile in the ribosome, and is involved in E site tRNA release. Its function is as follows. Protein L1 is also a translational repressor protein, it controls the translation of the L11 operon by binding to its mRNA. The chain is Large ribosomal subunit protein uL1 from Leuconostoc citreum (strain KM20).